A 101-amino-acid polypeptide reads, in one-letter code: MQKFVWKVVCLENKIAICLDQQLADKTSPVTEYFFWPQSDAWDELNKLLESKPWITLSNRIFVLNILTDLINYWDEKKSFDQSDWPLLKEKFPDVVFIYIK.

This sequence belongs to the chloroplast-specific ribosomal protein cS23 family. Part of the 30S ribosomal subunit.

The protein localises to the plastid. Its subcellular location is the chloroplast. Functionally, probably a ribosomal protein or a ribosome-associated protein. The protein is Small ribosomal subunit protein cS23 (ycf65) of Euglena myxocylindracea.